The chain runs to 218 residues: Large ribosomal subunit protein uL3 (218 aa).

The interval 127 to 167 (GFSRGPMSHGSKNHRLPGSIGAGTTPGRVYPGKRMAGRMGG) is disordered.

This sequence belongs to the universal ribosomal protein uL3 family. Part of the 50S ribosomal subunit. Forms a cluster with proteins L14 and L19.

One of the primary rRNA binding proteins, it binds directly near the 3'-end of the 23S rRNA, where it nucleates assembly of the 50S subunit. The polypeptide is Large ribosomal subunit protein uL3 (Prochlorococcus marinus (strain NATL1A)).